The primary structure comprises 327 residues: Zinc transport protein ZntB (327 aa).

The Cytoplasmic portion of the chain corresponds to 1–271; it reads MESFAGKELQ…AMNRRTYTMS (271 aa). A helical membrane pass occupies residues 272–292; sequence LLAMVFLPTTFLTGLFGVNLG. Residues 293–300 lie on the Periplasmic side of the membrane; sequence GIPGGDAP. A helical transmembrane segment spans residues 301–321; it reads FGFFTFCLMLVILVGGVAWWL. Residues 322-327 are Cytoplasmic-facing; the sequence is KRSKWL.

It belongs to the CorA metal ion transporter (MIT) (TC 1.A.35) family.

It is found in the cell inner membrane. The enzyme catalyses Zn(2+)(out) + H(+)(out) = Zn(2+)(in) + H(+)(in). Zinc transporter. Acts as a Zn(2+):proton symporter, which likely mediates zinc ion uptake. This is Zinc transport protein ZntB from Pectobacterium atrosepticum (strain SCRI 1043 / ATCC BAA-672) (Erwinia carotovora subsp. atroseptica).